Consider the following 449-residue polypeptide: MSQRWSRKKSRLPLAGLLFILVVTFMILFNERSIQQIHHHAASHTQNLREPSTFDFVKPNVPRINYLGAHEVLDRFSKCNSTKEYSGKKIGWVDPFEDHPGQVTKEEQKCDVFSGKWVFDNSSSYPLHKESQCPYMSDQLACQKHGRKDLEYQHWRWQPHACNLKRWNAIEMWEKLRGKRLMFVGDSLNRGQWISMVCLLQSVIPRDKQSMSPNAHLTIFRAEDYNATVEFLWAPLLVESNSDDPVNHRLSERIIRPDSVLKHASKWQHADILIFNTYLWWRQDSVKLRWSSEEKGSCEEVKSAEGMEMAMDSWGDWVANNVDPNKKRVFFVTMSPTHQWSREWNPGSEGNCYGEKKPIEEESYWGSGSDIPTMRMVKRVLERLGPKVSVINITQLSEYRKDGHPSVYRKFWEPLNEDRLKNPASYSDCTHWCVPGVPDVWNQLLFHFL.

Residues 12 to 29 (LPLAGLLFILVVTFMILF) form a helical; Signal-anchor for type II membrane protein membrane-spanning segment. Residues 185–187 (GDS) carry the GDS motif motif. Positions 428–442 (DCTHWCVPGVPDVWN) match the DCXHWCLPGXXDXWN motif motif.

Belongs to the PC-esterase family. TBL subfamily.

The protein resides in the membrane. May act as a bridging protein that binds pectin and other cell wall polysaccharides. Probably involved in maintaining esterification of pectins. May be involved in the specific O-acetylation of cell wall polymers. In Arabidopsis thaliana (Mouse-ear cress), this protein is Protein trichome birefringence-like 35 (TBL35).